The primary structure comprises 352 residues: Phosphoribosylformylglycinamidine cyclo-ligase (352 aa).

Belongs to the AIR synthase family.

The protein resides in the cytoplasm. It carries out the reaction 2-formamido-N(1)-(5-O-phospho-beta-D-ribosyl)acetamidine + ATP = 5-amino-1-(5-phospho-beta-D-ribosyl)imidazole + ADP + phosphate + H(+). It participates in purine metabolism; IMP biosynthesis via de novo pathway; 5-amino-1-(5-phospho-D-ribosyl)imidazole from N(2)-formyl-N(1)-(5-phospho-D-ribosyl)glycinamide: step 2/2. The protein is Phosphoribosylformylglycinamidine cyclo-ligase of Azoarcus sp. (strain BH72).